A 278-amino-acid polypeptide reads, in one-letter code: Diaminopimelate epimerase (278 aa).

Substrate-binding residues include asparagine 13, glutamine 46, and asparagine 66. Cysteine 75 acts as the Proton donor in catalysis. Substrate-binding positions include glycine 76 to asparagine 77, asparagine 159, asparagine 192, and glutamate 210 to arginine 211. The Proton acceptor role is filled by cysteine 219. Glycine 220–threonine 221 lines the substrate pocket.

Belongs to the diaminopimelate epimerase family. Homodimer.

It is found in the cytoplasm. It carries out the reaction (2S,6S)-2,6-diaminopimelate = meso-2,6-diaminopimelate. The protein operates within amino-acid biosynthesis; L-lysine biosynthesis via DAP pathway; DL-2,6-diaminopimelate from LL-2,6-diaminopimelate: step 1/1. Catalyzes the stereoinversion of LL-2,6-diaminopimelate (L,L-DAP) to meso-diaminopimelate (meso-DAP), a precursor of L-lysine and an essential component of the bacterial peptidoglycan. The sequence is that of Diaminopimelate epimerase from Laribacter hongkongensis (strain HLHK9).